Here is a 72-residue protein sequence, read N- to C-terminus: Metallothionein-like protein 1B (72 aa).

Belongs to the metallothionein superfamily. Type 15 family. In terms of tissue distribution, expressed in leaves of mature plants.

In terms of biological role, metallothioneins have a high content of cysteine residues that bind various heavy metals. Functions as a metal chelator of nickel (Ni), cadmium (Cd), zinc (Zn) and copper (Cu). Possesses higher affinity for Ni and Cd ions compared to Zn and Cu ions. The sequence is that of Metallothionein-like protein 1B (MT1B) from Oryza sativa subsp. japonica (Rice).